Here is a 516-residue protein sequence, read N- to C-terminus: 7-chloro-L-tryptophan 6-halogenase KtzR (516 aa).

FAD contacts are provided by glycine 6, threonine 8, alanine 9, glutamate 42, and alanine 43. Residue lysine 71 is part of the active site. Position 195 (valine 195) interacts with FAD. 2 residues coordinate chloride: threonine 357 and glycine 358. Isoleucine 359 is an FAD binding site.

Belongs to the flavin-dependent halogenase family. Bacterial tryptophan halogenase subfamily.

It catalyses the reaction 7-chloro-L-tryptophan + FADH2 + chloride + O2 = 6,7-dichloro-L-tryptophan + FAD + 2 H2O. Involved in the biosynthesis of kutznerides, actinomycete-derived antifungal and antimicrobial cyclic hexadepsipeptides. Together with KtzQ, catalyzes the regiospecific dichlorination of L-tryptophan (L-Trp) to produce 6,7-dichloro-L-tryptophan. KtzR catalyzes the chlorination of 7-chloro-L-tryptophan at C6 position to yield 6,7-dichloro-L-tryptophan. Can also use L-Trp as substrate and form 6-chloro-L-tryptophan, but has a 120-fold preference for 7-chloro-L-tryptophan over L-Trp. Cannot use piperazic acid or gamma,delta-dehydropiperazic acid. This Kutzneria sp. (strain 744) protein is 7-chloro-L-tryptophan 6-halogenase KtzR.